The following is a 239-amino-acid chain: Fatty acid metabolism regulator protein (239 aa).

The HTH gntR-type domain maps to 6–74 (QSPAGFAEEY…HGKPTKVNNF (69 aa)). The segment at residues 34–53 (ERELSELIGVTRTTLREVLQ) is a DNA-binding region (H-T-H motif).

Homodimer.

It is found in the cytoplasm. In terms of biological role, multifunctional regulator of fatty acid metabolism. This Cronobacter sakazakii (strain ATCC BAA-894) (Enterobacter sakazakii) protein is Fatty acid metabolism regulator protein.